We begin with the raw amino-acid sequence, 275 residues long: Transcription factor Ovo-like 2 (275 aa).

Residues 15-101 (SVRSWDELPD…GHLATKQRPV (87 aa)) are disordered. Composition is skewed to basic and acidic residues over residues 18-29 (SWDELPDEKRAD) and 39-49 (LLHDPPEDCRS). Over residues 56-76 (GSGSSSAGEPGGAESSSSPHA) the composition is skewed to low complexity. The segment covering 80 to 89 (ETPEPGDAEG) has biased composition (acidic residues). C2H2-type zinc fingers lie at residues 119–141 (HSCDLCGKGFRLQRMLNRHLKCH), 147–169 (HLCTFCGKGFNDTFDLKRHVRTH), 175–198 (YKCNVCNKAFTQRCSLESHLKKIH), and 214–237 (YVCEDCGYTGPTQEDLYLHVNSAH). The residue at position 269 (serine 269) is a Phosphoserine.

It belongs to the krueppel C2H2-type zinc-finger protein family. In terms of assembly, interacts (via zinc-finger domains) with CEBPA (via bZIP domain); the interaction inhibits the transcription factor activity of CEBPA and is required to repress adipogenesis. As to expression, expressed in testis, ovary, heart and skeletal muscle. Expressed in the cornea, but absent from the corneal endothelium.

The protein resides in the nucleus. Zinc-finger transcription repressor factor. Plays a critical role in maintaining the identity of epithelial lineages by suppressing epithelial-to mesenchymal transition (EMT) mainly through the repression of ZEB1, an EMT inducer. Positively regulates neuronal differentiation. Suppresses cell cycling and terminal differentiation of keratinocytes by directly repressing MYC and NOTCH1. Important for the correct development of primordial germ cells in embryos. Plays dual functions in thermogenesis and adipogenesis to maintain energy balance. Essential for brown/beige adipose tissue-mediated thermogenesis, is necessary for the development of brown adipocytes. In white adipose tissues, limits adipogenesis by blocking CEBPA binding to its transcriptional targets and inhibiting its transcription factor activity. In Homo sapiens (Human), this protein is Transcription factor Ovo-like 2.